Reading from the N-terminus, the 491-residue chain is Cytochrome P450 2H1 (491 aa).

C436 serves as a coordination point for heme.

The protein belongs to the cytochrome P450 family. Heme serves as cofactor. In terms of tissue distribution, expressed in liver.

Its subcellular location is the endoplasmic reticulum membrane. The protein localises to the microsome membrane. It catalyses the reaction an organic molecule + reduced [NADPH--hemoprotein reductase] + O2 = an alcohol + oxidized [NADPH--hemoprotein reductase] + H2O + H(+). Its function is as follows. Cytochromes P450 are a group of heme-thiolate monooxygenases. In liver microsomes, this enzyme is involved in an NADPH-dependent electron transport pathway. It oxidizes a variety of structurally unrelated compounds, including steroids, fatty acids, and xenobiotics. The sequence is that of Cytochrome P450 2H1 (CYP2H1) from Gallus gallus (Chicken).